Reading from the N-terminus, the 213-residue chain is Endoplasmic reticulum vesicle protein 25 (213 aa).

An N-terminal signal peptide occupies residues 1–20; that stretch reads MILRIPSLLYLFTLLTAVYA. The Lumenal segment spans residues 21 to 181; that stretch reads VKFDLTSDRN…TNESTNQRVK (161 aa). Residues 33–122 enclose the GOLD domain; it reads PSIIWNFASA…VRSVELDVDI (90 aa). The chain crosses the membrane as a helical span at residues 182–202; that stretch reads VFSVLIICCTIGLGVWQLLHL. The Cytoplasmic portion of the chain corresponds to 203-213; that stretch reads RSFFKRKYLID.

It belongs to the EMP24/GP25L family.

It is found in the endoplasmic reticulum membrane. It localises to the golgi apparatus membrane. In terms of biological role, constituent of COPII-coated endoplasmic reticulum-derived transport vesicles. Required for efficient transport of a subset of secretory proteins to the Golgi. Facilitates retrograde transport from the Golgi to the endoplasmic reticulum. The protein is Endoplasmic reticulum vesicle protein 25 (ERV25) of Cryptococcus neoformans var. neoformans serotype D (strain B-3501A) (Filobasidiella neoformans).